We begin with the raw amino-acid sequence, 428 residues long: Putative zinc metalloprotease SAS1196 (428 aa).

H21 lines the Zn(2+) pocket. Residue E22 is part of the active site. H25 is a Zn(2+) binding site. A run of 4 helical transmembrane segments spans residues 172 to 194, 309 to 331, 352 to 374, and 401 to 420; these read FLTLFAGPLFNFILALVLFIGLA, GSTLIFTAVVGMLASIFTGGFSF, IISLIGYTALLSVNLGIMNLIPI, and TTIIAIGAIFMVVIMILVTW. In terms of domain architecture, PDZ spans 186–269; the sequence is ALVLFIGLAY…TKSVELTPKK (84 aa).

It belongs to the peptidase M50B family. The cofactor is Zn(2+).

It localises to the cell membrane. The polypeptide is Putative zinc metalloprotease SAS1196 (Staphylococcus aureus (strain MSSA476)).